The primary structure comprises 294 residues: MGDGVSEERSPLCGKSATSCSERVRDRGTRADLECSLRGHSLKDIPVTSTSSPGSSKEEVLDSQSPGEADYCRRILVRDAKGTIREIVLPKGLDLDRPKRTRTSFTAEQLYRLELEFQRCQYVVGRERTELARQLNLSETQVKVWFQNRRTKQKKDQSRDSEKRSSSTSESFATCNILRLLEQGRLLSVPAPPNMISSQNNMGTSSGNGTSLGTSGSTSPVISTTPPGAGAFSLQVPSLAASSSPRLPTPFYFPGPLLGGLHEIPSGYGLGSSAFEPYTRLDRKDTASGKKSTS.

A compositionally biased stretch (basic and acidic residues) spans 1–10 (MGDGVSEERS). 5 disordered regions span residues 1-27 (MGDGVSEERSPLCGKSATSCSERVRDR), 43-65 (KDIPVTSTSSPGSSKEEVLDSQS), 149-168 (RRTKQKKDQSRDSEKRSSST), 190-223 (PAPPNMISSQNNMGTSSGNGTSLGTSGSTSPVIS), and 272-294 (SSAFEPYTRLDRKDTASGKKSTS). Positions 98 to 157 (PKRTRTSFTAEQLYRLELEFQRCQYVVGRERTELARQLNLSETQVKVWFQNRRTKQKKDQ) form a DNA-binding region, homeobox. The segment covering 154-165 (KKDQSRDSEKRS) has biased composition (basic and acidic residues). Low complexity predominate over residues 197-219 (SSQNNMGTSSGNGTSLGTSGSTS). The span at 279-288 (TRLDRKDTAS) shows a compositional bias: basic and acidic residues.

It belongs to the EMX homeobox family.

The protein localises to the nucleus. In terms of biological role, transcription factor that may function in dorsoventral specification of the forebrain. Regulates the expression of Wnt signaling antagonists. The polypeptide is Ventral anterior homeobox 2b (vax2-b) (Xenopus laevis (African clawed frog)).